We begin with the raw amino-acid sequence, 348 residues long: Bombesin receptor-activated protein C6orf89 homolog (348 aa).

Over 1–58 (MDLAANEISIYDKLSETVDLVRQTGHQCGMSEKAIEKFIRQLLEKNEPQRGPPQYPLL) the chain is Cytoplasmic. A helical membrane pass occupies residues 59–79 (IAMYKVLLTLGLILFTAYFVI). Over 80–348 (QPFSSLAPEP…ICDGTTLSEL (269 aa)) the chain is Extracellular.

As to quaternary structure, homodimer. Interacts with BRS3. Interacts (via N-terminus) with SIN3B. In terms of processing, glycosylated.

It is found in the golgi apparatus membrane. The protein resides in the cytoplasm. In terms of biological role, exhibits histone deacetylase (HDAC) enhancer properties. May play a role in cell cycle progression and wound repair of bronchial epithelial cells. The sequence is that of Bombesin receptor-activated protein C6orf89 homolog from Rattus norvegicus (Rat).